The sequence spans 356 residues: Peptide chain release factor 1 (356 aa).

Residue Gln-230 is modified to N5-methylglutamine. The span at 279–289 (ALDSARSEARK) shows a compositional bias: basic and acidic residues. Positions 279 to 299 (ALDSARSEARKSQVGSGDRSE) are disordered.

Belongs to the prokaryotic/mitochondrial release factor family. Post-translationally, methylated by PrmC. Methylation increases the termination efficiency of RF1.

It localises to the cytoplasm. Functionally, peptide chain release factor 1 directs the termination of translation in response to the peptide chain termination codons UAG and UAA. The protein is Peptide chain release factor 1 (prfA) of Caulobacter vibrioides (strain ATCC 19089 / CIP 103742 / CB 15) (Caulobacter crescentus).